A 593-amino-acid polypeptide reads, in one-letter code: Aspartate--tRNA ligase (593 aa).

Residue E180 coordinates L-aspartate. Residues 204–207 (QIFK) form an aspartate region. Residue R226 coordinates L-aspartate. ATP is bound by residues 226-228 (RDE) and Q235. L-aspartate is bound at residue H453. E487 is a binding site for ATP. R494 serves as a coordination point for L-aspartate. An ATP-binding site is contributed by 539–542 (GLDR).

Belongs to the class-II aminoacyl-tRNA synthetase family. Type 1 subfamily. Homodimer.

Its subcellular location is the cytoplasm. The enzyme catalyses tRNA(Asp) + L-aspartate + ATP = L-aspartyl-tRNA(Asp) + AMP + diphosphate. Its function is as follows. Catalyzes the attachment of L-aspartate to tRNA(Asp) in a two-step reaction: L-aspartate is first activated by ATP to form Asp-AMP and then transferred to the acceptor end of tRNA(Asp). The protein is Aspartate--tRNA ligase of Clostridium botulinum (strain 657 / Type Ba4).